Here is a 132-residue protein sequence, read N- to C-terminus: Small ribosomal subunit protein uS8c (132 aa).

This sequence belongs to the universal ribosomal protein uS8 family. In terms of assembly, part of the 30S ribosomal subunit.

Its subcellular location is the plastid. It is found in the chloroplast. Its function is as follows. One of the primary rRNA binding proteins, it binds directly to 16S rRNA central domain where it helps coordinate assembly of the platform of the 30S subunit. This Pinus thunbergii (Japanese black pine) protein is Small ribosomal subunit protein uS8c (rps8).